The following is a 152-amino-acid chain: D-aminoacyl-tRNA deacylase (152 aa).

Residues 137–138 (GP) carry the Gly-cisPro motif, important for rejection of L-amino acids motif.

The protein belongs to the DTD family. In terms of assembly, homodimer.

Its subcellular location is the cytoplasm. It catalyses the reaction glycyl-tRNA(Ala) + H2O = tRNA(Ala) + glycine + H(+). The catalysed reaction is a D-aminoacyl-tRNA + H2O = a tRNA + a D-alpha-amino acid + H(+). Its function is as follows. An aminoacyl-tRNA editing enzyme that deacylates mischarged D-aminoacyl-tRNAs. Also deacylates mischarged glycyl-tRNA(Ala), protecting cells against glycine mischarging by AlaRS. Acts via tRNA-based rather than protein-based catalysis; rejects L-amino acids rather than detecting D-amino acids in the active site. By recycling D-aminoacyl-tRNA to D-amino acids and free tRNA molecules, this enzyme counteracts the toxicity associated with the formation of D-aminoacyl-tRNA entities in vivo and helps enforce protein L-homochirality. In Aromatoleum aromaticum (strain DSM 19018 / LMG 30748 / EbN1) (Azoarcus sp. (strain EbN1)), this protein is D-aminoacyl-tRNA deacylase.